Here is a 312-residue protein sequence, read N- to C-terminus: Ribosomal RNA small subunit methyltransferase H (312 aa).

S-adenosyl-L-methionine contacts are provided by residues 35–37, D55, F79, D101, and Q108; that span reads GGH.

It belongs to the methyltransferase superfamily. RsmH family.

It localises to the cytoplasm. It catalyses the reaction cytidine(1402) in 16S rRNA + S-adenosyl-L-methionine = N(4)-methylcytidine(1402) in 16S rRNA + S-adenosyl-L-homocysteine + H(+). Its function is as follows. Specifically methylates the N4 position of cytidine in position 1402 (C1402) of 16S rRNA. This Buchnera aphidicola subsp. Schizaphis graminum (strain Sg) protein is Ribosomal RNA small subunit methyltransferase H.